Here is a 275-residue protein sequence, read N- to C-terminus: Pyrroline-5-carboxylate reductase (275 aa).

It belongs to the pyrroline-5-carboxylate reductase family.

It is found in the cytoplasm. It catalyses the reaction L-proline + NADP(+) = (S)-1-pyrroline-5-carboxylate + NADPH + 2 H(+). It carries out the reaction L-proline + NAD(+) = (S)-1-pyrroline-5-carboxylate + NADH + 2 H(+). It functions in the pathway amino-acid biosynthesis; L-proline biosynthesis; L-proline from L-glutamate 5-semialdehyde: step 1/1. Catalyzes the reduction of 1-pyrroline-5-carboxylate (PCA) to L-proline. This is Pyrroline-5-carboxylate reductase from Pasteurella multocida (strain Pm70).